The following is a 923-amino-acid chain: Transportin-3 (923 aa).

Met-1 bears the N-acetylmethionine mark. Ser-74 bears the Phosphoserine mark. A phosphothreonine mark is found at His-242 and Thr-896.

In terms of assembly, interacts with (GTP-bound) Ran. Interacts with (phosphorylated) SFRS1 and SFRS2; leading to their nuclear import. Interacts with NUP62. Interacts with RBM4. Interacts with CPSF6, promoting its nuclear import.

The protein localises to the nucleus envelope. Its subcellular location is the cytoplasm. In terms of biological role, importin, which transports target proteins into the nucleus. Specifically mediates the nuclear import of splicing factor serine/arginine (SR) proteins, such as RBM4, SFRS1 and SFRS2, by recognizing phosphorylated SR domains. Also mediates the nuclear import of serine/arginine (SR) protein CPSF6, independently of CPSF6 phosphorylation. The nuclear import process is regulated by the small GTPase Ran that partitions between cytoplasm and nucleus in the predominantly GDP- and GTP-bound form, respectively. Importin associates with target cargo proteins in the cytoplasm, and the competitive binding of GTP-bound Ran induces the release of cargos in the nucleus. The protein is Transportin-3 of Mus musculus (Mouse).